The following is a 557-amino-acid chain: uncharacterized protein (557 aa).

Residues 70 to 224 (KVVEKMNGKA…FNLVSLLKPG (155 aa)) form the Helicase ATP-binding domain. Position 82–90 (82–90 (ADEVGLGKT)) interacts with ATP. Positions 175-178 (DEAH) match the DEAH box motif. The Helicase C-terminal domain maps to 363–524 (QVVDLIKKID…NFEEHLHDIL (162 aa)).

It belongs to the SNF2/RAD54 helicase family.

This is an uncharacterized protein from Bacillus subtilis (strain 168).